Reading from the N-terminus, the 823-residue chain is High affinity cAMP-specific and IBMX-insensitive 3',5'-cyclic phosphodiesterase 8A (823 aa).

Residues 1–55 form a disordered region; sequence MGCAPSIHTSENRTFSHSDGEDEDVDVDVPGPAPRSIQRWSTAPGLVEPQPRDNG. Positions 10–19 are enriched in basic and acidic residues; it reads SENRTFSHSD. Residues 209-280 form the PAS domain; it reads ACNSVFTALE…AINSCVTVDK (72 aa). The 43-residue stretch at 283-325 folds into the PAC domain; the sequence is QGVYHTQKKNGDNIQQNVKIIPVIGQGGKIRHYVSIIRVCNGN. The segment at 338–373 is disordered; it reads DSQTDNQAGKHKDRRKHSMDAKAVSSRTSDVSSQRR. Phosphoserine; by PKA is present on Ser355. Phosphoserine is present on residues Ser382 and Ser452. The residue at position 456 (Tyr456) is a Phosphotyrosine. The region spanning 475–814 is the PDEase domain; that stretch reads SLHDVPPRIA…RYWKGLDEKK (340 aa). His551 serves as the catalytic Proton donor. Positions 555, 591, 592, and 720 each coordinate a divalent metal cation.

This sequence belongs to the cyclic nucleotide phosphodiesterase family. PDE8 subfamily. As to quaternary structure, interacts with RAF1. The interaction promotes RAF1 activity. The cofactor is a divalent metal cation. Phosphorylated at Ser-355 by PKA under elevated cAMP conditions, this enhances catalytic activity. Expressed in multiple tissues, with highest levels in testis, followed by liver, heart, skeletal muscle, and kidney. In the testis, expressed specifically in the seminiferous tubules, in postmitotic pachytene spermatocytes. Low expression, if any, in lung, smooth muscle, pancreas, thyroid, thymus, submaxillary gland, spleen, prostate, epididymus, uterus.

It carries out the reaction 3',5'-cyclic AMP + H2O = AMP + H(+). It participates in purine metabolism; 3',5'-cyclic AMP degradation; AMP from 3',5'-cyclic AMP: step 1/1. Inhibited by dipyridimole. Insensitive to selective PDE inhibitor rolipram and to the non-selective inhibitor, IBMX. Hydrolyzes the second messenger cAMP, which is a key regulator of many important physiological processes. May be involved in maintaining basal levels of the cyclic nucleotide and/or in the cAMP regulation of germ cell development. Binding to RAF1 reduces RAF1 'Ser-259' inhibitory-phosphorylation and stimulates RAF1-dependent EGF-activated ERK-signaling. Protects against cell death induced by hydrogen peroxide and staurosporine. The polypeptide is High affinity cAMP-specific and IBMX-insensitive 3',5'-cyclic phosphodiesterase 8A (Pde8a) (Mus musculus (Mouse)).